A 169-amino-acid chain; its full sequence is uncharacterized protein (169 aa).

2 helical membrane passes run 62 to 84 (RWGF…LLGL) and 94 to 116 (ALML…YWWF).

The protein localises to the cell membrane. This is an uncharacterized protein from Archaeoglobus fulgidus (strain ATCC 49558 / DSM 4304 / JCM 9628 / NBRC 100126 / VC-16).